We begin with the raw amino-acid sequence, 623 residues long: MTQEKKKFDAEVGKILNLMIHSLYSNKEIFMRELISNASDACDKLRYLSQSNNTLVAGDSNFKITVKIDKNNGQIIIRDNGIGMNKEDLIENLGTIARSGTANFLKNLSGDSKKDNMLIGQFGVGFYSSFMVADKVTVTSRKAGEDKVYVWESDGLGEYIVSNSGKEFTRGTAIVLNIKKEEDNFLDHFRLKHIVKSYSDHIAVPIYFFDENGNSEIQLNSASALWTRPKLEITEEQYKEFYKSLSYTIDDPWITLHNKNEGAIEFTNLLFIPSSKTFDLFHPDRKRRVKLYIKRVFISDENIDLIPSYLRFLRGVVDSEDLPLNISRESLQHNSILDKIKNAITKRVLAELKKKKEESPEDYNKFWSNFGGALKEGLCESTTDHEKLLEVCIFRSALHNKMISLDEYIANFKEGQNTIYYLSGDNPDKLLSSPQIEGLLSKNIDVLLFTDTVDDFWVNVNSEYKGHAIKSATRSDIDVEQTTSSSEEKNTDSKKSDDEYKLLTDYFKETLGDLVKDVKISKKLTSSPACLAVSESAMDIRMERFLIEQKQIANASAKNLELNPKNKIIEKIFNDLKANNKNNKELVNLIFDQACILEGEPVADTGAFSKRLNDIVQKAILSL.

Residues 1-328 (MTQEKKKFDA…SEDLPLNISR (328 aa)) form an a; substrate-binding region. A b region spans residues 329 to 544 (ESLQHNSILD…ESAMDIRMER (216 aa)). The tract at residues 545-623 (FLIEQKQIAN…DIVQKAILSL (79 aa)) is c.

The protein belongs to the heat shock protein 90 family. Homodimer.

The protein resides in the cytoplasm. Functionally, molecular chaperone. Has ATPase activity. In Rickettsia canadensis (strain McKiel), this protein is Chaperone protein HtpG.